Here is a 202-residue protein sequence, read N- to C-terminus: LexA repressor (202 aa).

Positions 28 to 48 (RAEIAQQLGFRSPNAAEEHLK) form a DNA-binding region, H-T-H motif. Catalysis depends on for autocatalytic cleavage activity residues S119 and K156.

Belongs to the peptidase S24 family. Homodimer.

The enzyme catalyses Hydrolysis of Ala-|-Gly bond in repressor LexA.. Represses a number of genes involved in the response to DNA damage (SOS response), including recA and lexA. Binds to the 16 bp palindromic sequence 5'-CTGTATATATATACAG-3'. In the presence of single-stranded DNA, RecA interacts with LexA causing an autocatalytic cleavage which disrupts the DNA-binding part of LexA, leading to derepression of the SOS regulon and eventually DNA repair. This chain is LexA repressor, found in Pectobacterium carotovorum subsp. carotovorum (Erwinia carotovora subsp. carotovora).